A 3462-amino-acid chain; its full sequence is DNA-directed RNA polymerase subunit beta'' (3462 aa).

Residues Cys263, Cys335, Cys342, and Cys345 each coordinate Zn(2+). Residues 541 to 1085 (KIDDQELSSV…PNKIFSSNLF (545 aa)) are insert-1. The insert-2 stretch occupies residues 1528 to 1585 (PQSANERKQILKKARQKLRLFPLNLNEKKNRFSSVTLDLLRDQTTLHKMQSCGEAESG). An insert-3 region spans residues 1602–1699 (KKITEIFTFC…FSKQMGNRLL (98 aa)). The segment at 1938 to 2168 (LKNKMNQSFS…SQASWILETN (231 aa)) is insert-4. The interval 2320-2870 (NLVSGKLNFL…KKKIAKEGAF (551 aa)) is insert-5. Residues 2972 to 3196 (SKSQRGWFHN…IGQLLRYGKE (225 aa)) are insert-6.

Belongs to the RNA polymerase beta' chain family. RpoC2 subfamily. In terms of assembly, in plastids the minimal PEP RNA polymerase catalytic core is composed of four subunits: alpha, beta, beta', and beta''. When a (nuclear-encoded) sigma factor is associated with the core the holoenzyme is formed, which can initiate transcription. The cofactor is Zn(2+).

The protein resides in the plastid. It is found in the chloroplast. It catalyses the reaction RNA(n) + a ribonucleoside 5'-triphosphate = RNA(n+1) + diphosphate. In terms of biological role, DNA-dependent RNA polymerase catalyzes the transcription of DNA into RNA using the four ribonucleoside triphosphates as substrates. The sequence is that of DNA-directed RNA polymerase subunit beta'' from Tupiella akineta (Green alga).